A 141-amino-acid polypeptide reads, in one-letter code: uncharacterized protein (141 aa).

Residues 13–35 (PVIGVILMVAITVILAAVIASFV) traverse the membrane as a helical segment.

The protein localises to the membrane. This is an uncharacterized protein from Archaeoglobus fulgidus (strain ATCC 49558 / DSM 4304 / JCM 9628 / NBRC 100126 / VC-16).